Here is a 71-residue protein sequence, read N- to C-terminus: Exodeoxyribonuclease 7 small subunit (71 aa).

It belongs to the XseB family. Heterooligomer composed of large and small subunits.

The protein localises to the cytoplasm. The catalysed reaction is Exonucleolytic cleavage in either 5'- to 3'- or 3'- to 5'-direction to yield nucleoside 5'-phosphates.. Bidirectionally degrades single-stranded DNA into large acid-insoluble oligonucleotides, which are then degraded further into small acid-soluble oligonucleotides. The chain is Exodeoxyribonuclease 7 small subunit from Clostridium botulinum (strain 657 / Type Ba4).